The primary structure comprises 132 residues: Translation initiation factor 5A (132 aa).

Lysine 36 is subject to Hypusine.

It belongs to the eIF-5A family.

The protein resides in the cytoplasm. In terms of biological role, functions by promoting the formation of the first peptide bond. The protein is Translation initiation factor 5A (eIF5A) of Pyrobaculum neutrophilum (strain DSM 2338 / JCM 9278 / NBRC 100436 / V24Sta) (Thermoproteus neutrophilus).